A 255-amino-acid chain; its full sequence is 5'-nucleotidase SurE (255 aa).

A divalent metal cation is bound by residues Asp-8, Asp-9, Ser-40, and Asn-93.

The protein belongs to the SurE nucleotidase family. A divalent metal cation serves as cofactor.

The protein localises to the cytoplasm. The catalysed reaction is a ribonucleoside 5'-phosphate + H2O = a ribonucleoside + phosphate. Its function is as follows. Nucleotidase that shows phosphatase activity on nucleoside 5'-monophosphates. This chain is 5'-nucleotidase SurE, found in Azorhizobium caulinodans (strain ATCC 43989 / DSM 5975 / JCM 20966 / LMG 6465 / NBRC 14845 / NCIMB 13405 / ORS 571).